Consider the following 536-residue polypeptide: Chaperonin GroEL (536 aa).

ATP-binding positions include 29-32, 86-90, G412, and D493; these read TLGP and DGTTT.

This sequence belongs to the chaperonin (HSP60) family. In terms of assembly, forms a cylinder of 14 subunits composed of two heptameric rings stacked back-to-back. Interacts with the co-chaperonin GroES.

It is found in the cytoplasm. It carries out the reaction ATP + H2O + a folded polypeptide = ADP + phosphate + an unfolded polypeptide.. Functionally, together with its co-chaperonin GroES, plays an essential role in assisting protein folding. The GroEL-GroES system forms a nano-cage that allows encapsulation of the non-native substrate proteins and provides a physical environment optimized to promote and accelerate protein folding. The polypeptide is Chaperonin GroEL (Onion yellows phytoplasma (strain OY-M)).